The sequence spans 551 residues: Chaperonin GroEL (551 aa).

ATP contacts are provided by residues T30–P33, K51, D87–T91, G415, N479–A481, and D495.

Belongs to the chaperonin (HSP60) family. In terms of assembly, forms a cylinder of 14 subunits composed of two heptameric rings stacked back-to-back. Interacts with the co-chaperonin GroES.

It is found in the cytoplasm. It carries out the reaction ATP + H2O + a folded polypeptide = ADP + phosphate + an unfolded polypeptide.. Its function is as follows. Together with its co-chaperonin GroES, plays an essential role in assisting protein folding. The GroEL-GroES system forms a nano-cage that allows encapsulation of the non-native substrate proteins and provides a physical environment optimized to promote and accelerate protein folding. The chain is Chaperonin GroEL from Acidithiobacillus ferrooxidans (strain ATCC 23270 / DSM 14882 / CIP 104768 / NCIMB 8455) (Ferrobacillus ferrooxidans (strain ATCC 23270)).